The primary structure comprises 87 residues: U14-lycotoxin-Ls1b (87 aa).

An N-terminal signal peptide occupies residues 1 to 20 (MNSKVFVVLLLLALSTCVLS). In terms of domain architecture, WAP spans 21–66 (EKYCPTPRNTSCKKMNIRNNCCRDSDCTSNAFCCAEPCGNFCHKAS). 5 disulfide bridges follow: Cys-24–Cys-54, Cys-32–Cys-58, Cys-41–Cys-53, Cys-42–Cys-80, and Cys-47–Cys-62.

Belongs to the venom protein 11 family. 01 (wap-1) subfamily. Post-translationally, contains 5 disulfide bonds. As to expression, expressed by the venom gland.

It localises to the secreted. Has antibacterial activity. This chain is U14-lycotoxin-Ls1b, found in Lycosa singoriensis (Wolf spider).